A 432-amino-acid polypeptide reads, in one-letter code: Adenylosuccinate synthetase (432 aa).

GTP contacts are provided by residues 13-19 and 41-43; these read GDEGKGK and GHT. Aspartate 14 serves as the catalytic Proton acceptor. Positions 14 and 41 each coordinate Mg(2+). Residues 14–17, 39–42, threonine 130, arginine 144, glutamine 225, threonine 240, and arginine 304 contribute to the IMP site; these read DEGK and NAGH. Histidine 42 (proton donor) is an active-site residue. 300 to 306 is a binding site for substrate; the sequence is ATTGRRR. GTP is bound by residues arginine 306, 332-334, and 415-417; these read KLD and STG.

It belongs to the adenylosuccinate synthetase family. As to quaternary structure, homodimer. Mg(2+) is required as a cofactor.

Its subcellular location is the cytoplasm. The catalysed reaction is IMP + L-aspartate + GTP = N(6)-(1,2-dicarboxyethyl)-AMP + GDP + phosphate + 2 H(+). The protein operates within purine metabolism; AMP biosynthesis via de novo pathway; AMP from IMP: step 1/2. Functionally, plays an important role in the de novo pathway of purine nucleotide biosynthesis. Catalyzes the first committed step in the biosynthesis of AMP from IMP. The sequence is that of Adenylosuccinate synthetase from Citrobacter koseri (strain ATCC BAA-895 / CDC 4225-83 / SGSC4696).